The following is a 344-amino-acid chain: uncharacterized protein (344 aa).

The N-terminal stretch at M1–A27 is a signal peptide. The GH18 domain occupies G29–K344. The Proton donor role is filled by E140.

Belongs to the glycosyl hydrolase 18 family.

This is an uncharacterized protein from Bacillus subtilis (strain 168).